We begin with the raw amino-acid sequence, 485 residues long: NADH-quinone oxidoreductase subunit N (485 aa).

The next 14 membrane-spanning stretches (helical) occupy residues 8–28 (LIAL…MLSI), 35–55 (FLNA…LWFV), 71–91 (GFAM…CTFA), 105–125 (FYLL…ANHL), 127–147 (SLFL…GYAF), 159–179 (YTIL…LVYA), 203–223 (LLAG…LVPF), 235–255 (PAPV…GVVM), 271–291 (VVLA…ALSQ), 297–317 (LLGY…IALQ), 326–346 (VGVY…VVSL), 373–393 (AAVM…LGFI), 408–430 (WWLV…RVAV), and 450–470 (YSAG…LGVW).

It belongs to the complex I subunit 2 family. NDH-1 is composed of 13 different subunits. Subunits NuoA, H, J, K, L, M, N constitute the membrane sector of the complex.

It localises to the cell inner membrane. It catalyses the reaction a quinone + NADH + 5 H(+)(in) = a quinol + NAD(+) + 4 H(+)(out). In terms of biological role, NDH-1 shuttles electrons from NADH, via FMN and iron-sulfur (Fe-S) centers, to quinones in the respiratory chain. The immediate electron acceptor for the enzyme in this species is believed to be ubiquinone. Couples the redox reaction to proton translocation (for every two electrons transferred, four hydrogen ions are translocated across the cytoplasmic membrane), and thus conserves the redox energy in a proton gradient. The sequence is that of NADH-quinone oxidoreductase subunit N from Shigella boydii serotype 4 (strain Sb227).